The following is a 351-amino-acid chain: Holliday junction branch migration complex subunit RuvB (351 aa).

The segment at 1–182 (MNDRLITPDA…FGIVQRLEYY (182 aa)) is large ATPase domain (RuvB-L). Residues Ile-21, Arg-22, Gly-63, Lys-66, Thr-67, Thr-68, 129–131 (EDF), Arg-172, Tyr-182, and Arg-219 each bind ATP. Thr-67 provides a ligand contact to Mg(2+). The segment at 183–253 (NVADLSGIVK…VAHAAMELLN (71 aa)) is small ATPAse domain (RuvB-S). The tract at residues 256–351 (RNGFDEQDRR…QDAPPVGRER (96 aa)) is head domain (RuvB-H). DNA-binding residues include Arg-292, Arg-311, and Arg-316. The interval 328 to 351 (LNPPRQPDTSPDLFQDAPPVGRER) is disordered.

Belongs to the RuvB family. As to quaternary structure, homohexamer. Forms an RuvA(8)-RuvB(12)-Holliday junction (HJ) complex. HJ DNA is sandwiched between 2 RuvA tetramers; dsDNA enters through RuvA and exits via RuvB. An RuvB hexamer assembles on each DNA strand where it exits the tetramer. Each RuvB hexamer is contacted by two RuvA subunits (via domain III) on 2 adjacent RuvB subunits; this complex drives branch migration. In the full resolvosome a probable DNA-RuvA(4)-RuvB(12)-RuvC(2) complex forms which resolves the HJ.

It is found in the cytoplasm. The catalysed reaction is ATP + H2O = ADP + phosphate + H(+). Its function is as follows. The RuvA-RuvB-RuvC complex processes Holliday junction (HJ) DNA during genetic recombination and DNA repair, while the RuvA-RuvB complex plays an important role in the rescue of blocked DNA replication forks via replication fork reversal (RFR). RuvA specifically binds to HJ cruciform DNA, conferring on it an open structure. The RuvB hexamer acts as an ATP-dependent pump, pulling dsDNA into and through the RuvAB complex. RuvB forms 2 homohexamers on either side of HJ DNA bound by 1 or 2 RuvA tetramers; 4 subunits per hexamer contact DNA at a time. Coordinated motions by a converter formed by DNA-disengaged RuvB subunits stimulates ATP hydrolysis and nucleotide exchange. Immobilization of the converter enables RuvB to convert the ATP-contained energy into a lever motion, pulling 2 nucleotides of DNA out of the RuvA tetramer per ATP hydrolyzed, thus driving DNA branch migration. The RuvB motors rotate together with the DNA substrate, which together with the progressing nucleotide cycle form the mechanistic basis for DNA recombination by continuous HJ branch migration. Branch migration allows RuvC to scan DNA until it finds its consensus sequence, where it cleaves and resolves cruciform DNA. This chain is Holliday junction branch migration complex subunit RuvB, found in Alkalilimnicola ehrlichii (strain ATCC BAA-1101 / DSM 17681 / MLHE-1).